Reading from the N-terminus, the 87-residue chain is DNA-directed RNA polymerase subunit omega (87 aa).

The protein belongs to the RNA polymerase subunit omega family. The RNAP catalytic core consists of 2 alpha, 1 beta, 1 beta' and 1 omega subunit. When a sigma factor is associated with the core the holoenzyme is formed, which can initiate transcription.

It carries out the reaction RNA(n) + a ribonucleoside 5'-triphosphate = RNA(n+1) + diphosphate. Promotes RNA polymerase assembly. Latches the N- and C-terminal regions of the beta' subunit thereby facilitating its interaction with the beta and alpha subunits. The sequence is that of DNA-directed RNA polymerase subunit omega from Alcanivorax borkumensis (strain ATCC 700651 / DSM 11573 / NCIMB 13689 / SK2).